A 345-amino-acid polypeptide reads, in one-letter code: Ferrochelatase (345 aa).

His215 and Glu296 together coordinate Fe cation.

Belongs to the ferrochelatase family.

It is found in the cytoplasm. The enzyme catalyses heme b + 2 H(+) = protoporphyrin IX + Fe(2+). It functions in the pathway porphyrin-containing compound metabolism; protoheme biosynthesis; protoheme from protoporphyrin-IX: step 1/1. Catalyzes the ferrous insertion into protoporphyrin IX. In Rhodopseudomonas palustris (strain TIE-1), this protein is Ferrochelatase.